A 356-amino-acid polypeptide reads, in one-letter code: Branched-chain-amino-acid transaminase 1 (356 aa).

Lys197 bears the N6-(pyridoxal phosphate)lysine mark.

Belongs to the class-IV pyridoxal-phosphate-dependent aminotransferase family. The cofactor is pyridoxal 5'-phosphate.

It carries out the reaction L-leucine + 2-oxoglutarate = 4-methyl-2-oxopentanoate + L-glutamate. The enzyme catalyses L-isoleucine + 2-oxoglutarate = (S)-3-methyl-2-oxopentanoate + L-glutamate. It catalyses the reaction L-valine + 2-oxoglutarate = 3-methyl-2-oxobutanoate + L-glutamate. Its pathway is amino-acid biosynthesis; L-isoleucine biosynthesis; L-isoleucine from 2-oxobutanoate: step 4/4. It functions in the pathway amino-acid biosynthesis; L-leucine biosynthesis; L-leucine from 3-methyl-2-oxobutanoate: step 4/4. It participates in amino-acid biosynthesis; L-valine biosynthesis; L-valine from pyruvate: step 4/4. Its activity is regulated as follows. Inhibited by canaline. Transaminates branched-chain amino acids and ketoglutarate. Involved in the final step of the methionine regeneration pathway, where ketomethiobutyrate (KMTB) is converted to methionine via a transamination. The amino donor preference is isoleucine, leucine, valine, phenylalanine, and tyrosine. In Bacillus subtilis (strain 168), this protein is Branched-chain-amino-acid transaminase 1 (ilvE).